Reading from the N-terminus, the 256-residue chain is Triosephosphate isomerase (256 aa).

10–12 (NWK) is a substrate binding site. Histidine 96 functions as the Electrophile in the catalytic mechanism. Catalysis depends on glutamate 168, which acts as the Proton acceptor. Glycine 174 and serine 213 together coordinate substrate.

The protein belongs to the triosephosphate isomerase family. In terms of assembly, homodimer.

It is found in the cytoplasm. It catalyses the reaction D-glyceraldehyde 3-phosphate = dihydroxyacetone phosphate. Its pathway is carbohydrate biosynthesis; gluconeogenesis. The protein operates within carbohydrate degradation; glycolysis; D-glyceraldehyde 3-phosphate from glycerone phosphate: step 1/1. Functionally, involved in the gluconeogenesis. Catalyzes stereospecifically the conversion of dihydroxyacetone phosphate (DHAP) to D-glyceraldehyde-3-phosphate (G3P). In Wigglesworthia glossinidia brevipalpis, this protein is Triosephosphate isomerase.